Consider the following 82-residue polypeptide: MLPFVHEQIGTIIVNFFILTVVCAITLLVCLAVLTAIRLCVQCASGVNTLLFVPAFYIYNTGRNAYFKFQENRPPFPPEDWV.

The Virion surface portion of the chain corresponds to 1–16 (MLPFVHEQIGTIIVNF). A helical transmembrane segment spans residues 17–37 (FILTVVCAITLLVCLAVLTAI). The Intravirion portion of the chain corresponds to 38–78 (RLCVQCASGVNTLLFVPAFYIYNTGRNAYFKFQENRPPFPP).

It belongs to the betacoronaviruses E protein family. Homopentamer. Interacts with membrane protein M in the budding compartment of the host cell, which is located between endoplasmic reticulum and the Golgi complex. Interacts with Nucleoprotein.

The protein resides in the host Golgi apparatus membrane. Its function is as follows. Plays a central role in virus morphogenesis and assembly. Acts as a viroporin and self-assembles in host membranes forming pentameric protein-lipid pores that allow ion transport. Also plays a role in the induction of apoptosis. The chain is Envelope small membrane protein from Tylonycteris pachypus (Lesser bamboo bat).